Reading from the N-terminus, the 399-residue chain is Pyridinium-3,5-bisthiocarboxylic acid mononucleotide nickel insertion protein (399 aa).

The protein belongs to the LarC family.

It carries out the reaction Ni(II)-pyridinium-3,5-bisthiocarboxylate mononucleotide = pyridinium-3,5-bisthiocarboxylate mononucleotide + Ni(2+). Its function is as follows. Involved in the biosynthesis of a nickel-pincer cofactor ((SCS)Ni(II) pincer complex). Binds Ni(2+), and functions in nickel delivery to pyridinium-3,5-bisthiocarboxylic acid mononucleotide (P2TMN), to form the mature cofactor. Is thus probably required for the activation of nickel-pincer cofactor-dependent enzymes. This Clostridium kluyveri (strain ATCC 8527 / DSM 555 / NBRC 12016 / NCIMB 10680 / K1) protein is Pyridinium-3,5-bisthiocarboxylic acid mononucleotide nickel insertion protein.